A 216-amino-acid polypeptide reads, in one-letter code: Inorganic pyrophosphatase (216 aa).

The substrate site is built by K39, R53, and Y65. Mg(2+) contacts are provided by D93, D98, and D131. A substrate-binding site is contributed by Y168.

The protein belongs to the PPase family. Homohexamer. Requires Mg(2+) as cofactor.

It is found in the cytoplasm. The enzyme catalyses diphosphate + H2O = 2 phosphate + H(+). Its function is as follows. Catalyzes the hydrolysis of inorganic pyrophosphate (PPi) forming two phosphate ions. This Chlamydia caviae (strain ATCC VR-813 / DSM 19441 / 03DC25 / GPIC) (Chlamydophila caviae) protein is Inorganic pyrophosphatase.